The primary structure comprises 286 residues: Deaminated glutathione amidase (286 aa).

One can recognise a CN hydrolase domain in the interval 4 to 252 (ANVALLQLCS…VSALKVKIET (249 aa)). The active-site Proton acceptor is E42. K115 is an active-site residue. The Nucleophile role is filled by C157.

Belongs to the carbon-nitrogen hydrolase superfamily. NIT1/NIT2 family.

The enzyme catalyses N-(4-oxoglutaryl)-L-cysteinylglycine + H2O = L-cysteinylglycine + 2-oxoglutarate. Hydrolyzes deaminated glutathione (dGSH, 2-oxoglutaramate) to alpha-ketoglutarate (alpha-KG) and cysteinylglycine (specific activity 6.50 umol/min/mg), has less activity against alpha-ketoglutaramate (a-KGM, specific activity 0.20 umol/min/mg), very little activity on glutathione and none on L-glutamine. May function as a metabolite repair enzyme. The polypeptide is Deaminated glutathione amidase (Yersinia enterocolitica).